A 362-amino-acid polypeptide reads, in one-letter code: Cytochrome c oxidase subunit 2 (362 aa).

An N-terminal signal peptide occupies residues 1 to 28; it reads MEQQEKRGTVRKALLGSVIGFGGLALAG. Residue cysteine 29 is the site of N-palmitoyl cysteine attachment. Cysteine 29 is lipidated: S-diacylglycerol cysteine. 2 helical membrane-spanning segments follow: residues 60–80 and 107–127; these read FWVW…GLFI and IPLE…LFFF. A disordered region spans residues 171–206; it reads SDYVGTDEKRQEAAEKTKFDQGGDNPNPINGRSKTD. Positions 176 to 191 are enriched in basic and acidic residues; it reads TDEKRQEAAEKTKFDQ. Positions 197–206 are enriched in polar residues; that stretch reads NPINGRSKTD. Histidine 246, cysteine 287, glutamate 289, cysteine 291, histidine 295, and methionine 298 together coordinate Cu cation. The disordered stretch occupies residues 325 to 362; the sequence is NSDALKSIGEAPYATSTHPFNSERATRDGANFDDTAAA.

It belongs to the cytochrome c oxidase subunit 2 family. As to quaternary structure, associates with subunits I, III and IV to form cytochrome c oxidase. The cofactor is binuclear copper center (CuA).

It localises to the cell membrane. It carries out the reaction 4 Fe(II)-[cytochrome c] + O2 + 8 H(+)(in) = 4 Fe(III)-[cytochrome c] + 2 H2O + 4 H(+)(out). Its function is as follows. Subunits I and II form the functional core of the enzyme complex. Electrons originating in cytochrome c are transferred via heme a and Cu(A) to the binuclear center formed by heme a3 and Cu(B). This chain is Cytochrome c oxidase subunit 2 (ctaC), found in Corynebacterium diphtheriae (strain ATCC 700971 / NCTC 13129 / Biotype gravis).